A 198-amino-acid chain; its full sequence is MAGSTKDIDALIELMARLPGLGPRSARRAVLHLIRKRALLLTPLADLMGQVAATARECLNCGNVGTSDICDICTDERRATGELCVVEDVADLWAMERSGVFKGRYHVLGGTLSALDGVGPDELRIPRLADRVTAEAISEVILALNATIDGQTTAHYIADQLGGRVRLTSLAQGVPIGGELDYLDDGTISAAMRARKEL.

A C4-type zinc finger spans residues 58-73 (CLNCGNVGTSDICDIC). Positions 81-175 (GELCVVEDVA…RLTSLAQGVP (95 aa)) constitute a Toprim domain.

Belongs to the RecR family.

May play a role in DNA repair. It seems to be involved in an RecBC-independent recombinational process of DNA repair. It may act with RecF and RecO. The chain is Recombination protein RecR from Ruegeria pomeroyi (strain ATCC 700808 / DSM 15171 / DSS-3) (Silicibacter pomeroyi).